Here is a 207-residue protein sequence, read N- to C-terminus: ATP-dependent Clp protease proteolytic subunit (207 aa).

Residue S111 is the Nucleophile of the active site. The active site involves H136.

The protein belongs to the peptidase S14 family. Fourteen ClpP subunits assemble into 2 heptameric rings which stack back to back to give a disk-like structure with a central cavity, resembling the structure of eukaryotic proteasomes.

The protein resides in the cytoplasm. The enzyme catalyses Hydrolysis of proteins to small peptides in the presence of ATP and magnesium. alpha-casein is the usual test substrate. In the absence of ATP, only oligopeptides shorter than five residues are hydrolyzed (such as succinyl-Leu-Tyr-|-NHMec, and Leu-Tyr-Leu-|-Tyr-Trp, in which cleavage of the -Tyr-|-Leu- and -Tyr-|-Trp bonds also occurs).. In terms of biological role, cleaves peptides in various proteins in a process that requires ATP hydrolysis. Has a chymotrypsin-like activity. Plays a major role in the degradation of misfolded proteins. This Aliivibrio salmonicida (strain LFI1238) (Vibrio salmonicida (strain LFI1238)) protein is ATP-dependent Clp protease proteolytic subunit.